We begin with the raw amino-acid sequence, 605 residues long: Acetoin dehydrogenase operon transcriptional activator AcoR (605 aa).

The Sigma-54 factor interaction domain maps to 295-520; the sequence is VIGQSGRSQA…LFNVFERLSI (226 aa). ATP-binding positions include 323–330 and 387–396; these read GETGTGKE and ANQGTLFLDE. A DNA-binding region (H-T-H motif) is located at residues 578 to 597; it reads VSQAAKISGIPRSTFYKRLK.

Functionally, acts as a transcriptional activator of the acoABCL operon encoding the acetoin dehydrogenase complex. The sequence is that of Acetoin dehydrogenase operon transcriptional activator AcoR (acoR) from Bacillus subtilis (strain 168).